We begin with the raw amino-acid sequence, 179 residues long: Large ribosomal subunit protein uL5 (179 aa).

The protein belongs to the universal ribosomal protein uL5 family. As to quaternary structure, part of the 50S ribosomal subunit; part of the 5S rRNA/L5/L18/L25 subcomplex. Contacts the 5S rRNA and the P site tRNA. Forms a bridge to the 30S subunit in the 70S ribosome.

This is one of the proteins that bind and probably mediate the attachment of the 5S RNA into the large ribosomal subunit, where it forms part of the central protuberance. In the 70S ribosome it contacts protein S13 of the 30S subunit (bridge B1b), connecting the 2 subunits; this bridge is implicated in subunit movement. Contacts the P site tRNA; the 5S rRNA and some of its associated proteins might help stabilize positioning of ribosome-bound tRNAs. This Hamiltonella defensa subsp. Acyrthosiphon pisum (strain 5AT) protein is Large ribosomal subunit protein uL5.